Here is a 514-residue protein sequence, read N- to C-terminus: Histidine ammonia-lyase (514 aa).

Positions 147–149 form a cross-link, 5-imidazolinone (Ala-Gly); the sequence is ASG. 2,3-didehydroalanine (Ser) is present on Ser-148.

It belongs to the PAL/histidase family. In terms of processing, contains an active site 4-methylidene-imidazol-5-one (MIO), which is formed autocatalytically by cyclization and dehydration of residues Ala-Ser-Gly.

It is found in the cytoplasm. It carries out the reaction L-histidine = trans-urocanate + NH4(+). Its pathway is amino-acid degradation; L-histidine degradation into L-glutamate; N-formimidoyl-L-glutamate from L-histidine: step 1/3. The chain is Histidine ammonia-lyase from Gloeobacter violaceus (strain ATCC 29082 / PCC 7421).